The chain runs to 427 residues: 3-phosphoshikimate 1-carboxyvinyltransferase (427 aa).

3 residues coordinate 3-phosphoshikimate: Lys22, Ser23, and Arg27. Phosphoenolpyruvate is bound at residue Lys22. Phosphoenolpyruvate-binding residues include Gly96 and Arg124. 3-phosphoshikimate contacts are provided by Ser169, Ser170, Gln171, Ser197, Asp313, Asn336, and Lys340. Gln171 serves as a coordination point for phosphoenolpyruvate. Asp313 acts as the Proton acceptor in catalysis. Phosphoenolpyruvate is bound by residues Arg344, Arg386, and Lys411.

It belongs to the EPSP synthase family. As to quaternary structure, monomer.

The protein localises to the cytoplasm. The enzyme catalyses 3-phosphoshikimate + phosphoenolpyruvate = 5-O-(1-carboxyvinyl)-3-phosphoshikimate + phosphate. The protein operates within metabolic intermediate biosynthesis; chorismate biosynthesis; chorismate from D-erythrose 4-phosphate and phosphoenolpyruvate: step 6/7. In terms of biological role, catalyzes the transfer of the enolpyruvyl moiety of phosphoenolpyruvate (PEP) to the 5-hydroxyl of shikimate-3-phosphate (S3P) to produce enolpyruvyl shikimate-3-phosphate and inorganic phosphate. The protein is 3-phosphoshikimate 1-carboxyvinyltransferase of Salmonella choleraesuis (strain SC-B67).